The primary structure comprises 148 residues: UPF0260 protein Spro_2751 (148 aa).

This sequence belongs to the UPF0260 family.

This is UPF0260 protein Spro_2751 from Serratia proteamaculans (strain 568).